A 194-amino-acid chain; its full sequence is Glycerol-3-phosphate acyltransferase 2 (194 aa).

5 helical membrane-spanning segments follow: residues 1-21 (MWLL…AYVV), 64-84 (VLAV…LAAL), 112-132 (LAMA…VVIF), 135-155 (YISL…IYFH), and 156-173 (RPWP…LVIY).

This sequence belongs to the PlsY family. Probably interacts with PlsX.

The protein resides in the cell membrane. It carries out the reaction an acyl phosphate + sn-glycerol 3-phosphate = a 1-acyl-sn-glycero-3-phosphate + phosphate. Its pathway is lipid metabolism; phospholipid metabolism. In terms of biological role, catalyzes the transfer of an acyl group from acyl-phosphate (acyl-PO(4)) to glycerol-3-phosphate (G3P) to form lysophosphatidic acid (LPA). This enzyme utilizes acyl-phosphate as fatty acyl donor, but not acyl-CoA or acyl-ACP. The sequence is that of Glycerol-3-phosphate acyltransferase 2 from Moorella thermoacetica (strain ATCC 39073 / JCM 9320).